A 158-amino-acid chain; its full sequence is Crossover junction endodeoxyribonuclease RuvC (158 aa).

Active-site residues include D7, E67, and D139. D7, E67, and D139 together coordinate Mg(2+).

It belongs to the RuvC family. Homodimer which binds Holliday junction (HJ) DNA. The HJ becomes 2-fold symmetrical on binding to RuvC with unstacked arms; it has a different conformation from HJ DNA in complex with RuvA. In the full resolvosome a probable DNA-RuvA(4)-RuvB(12)-RuvC(2) complex forms which resolves the HJ. Mg(2+) serves as cofactor.

The protein resides in the cytoplasm. The catalysed reaction is Endonucleolytic cleavage at a junction such as a reciprocal single-stranded crossover between two homologous DNA duplexes (Holliday junction).. Functionally, the RuvA-RuvB-RuvC complex processes Holliday junction (HJ) DNA during genetic recombination and DNA repair. Endonuclease that resolves HJ intermediates. Cleaves cruciform DNA by making single-stranded nicks across the HJ at symmetrical positions within the homologous arms, yielding a 5'-phosphate and a 3'-hydroxyl group; requires a central core of homology in the junction. The consensus cleavage sequence is 5'-(A/T)TT(C/G)-3'. Cleavage occurs on the 3'-side of the TT dinucleotide at the point of strand exchange. HJ branch migration catalyzed by RuvA-RuvB allows RuvC to scan DNA until it finds its consensus sequence, where it cleaves and resolves the cruciform DNA. This Prochlorococcus marinus (strain MIT 9211) protein is Crossover junction endodeoxyribonuclease RuvC.